Reading from the N-terminus, the 185-residue chain is UPF0301 protein Tbd_2579 (185 aa).

The protein belongs to the UPF0301 (AlgH) family.

The polypeptide is UPF0301 protein Tbd_2579 (Thiobacillus denitrificans (strain ATCC 25259 / T1)).